Consider the following 315-residue polypeptide: MPDMKLFAGNAIPELAQRVANRLYTNLGDAAVGRFSDGEVSVQVNENVRGGDIFIIQSTCAPTNDNLMELVVMVDALRRASAGRITAVIPYFGYARQDRRVRSARVPITAKVVADFLSSVGVDRVLTVDLHAEQIQGFFDVPVDNVFGSPILLEDMLQKELENPIVVSPDIGGVVRARAIAKLLNDTDMAIIDKRRPRANVSQVMHIIGDVAGRDCVLVDDMIDTGGTLCKAAEALKERGAKRVFAYATHPIFSGNAVDNIKNSVIDEVVVCDTIPLSAEIKALNKVRTLTLSGMLAEAIRRISNEESISAMFEH.

ATP is bound by residues 37-39 and 96-97; these read DGE and RQ. Mg(2+)-binding residues include histidine 131 and aspartate 170. The active site involves lysine 194. Residues arginine 196, aspartate 220, and 224-228 each bind D-ribose 5-phosphate; that span reads DTGGT.

This sequence belongs to the ribose-phosphate pyrophosphokinase family. Class I subfamily. As to quaternary structure, homohexamer. Mg(2+) serves as cofactor.

It localises to the cytoplasm. The enzyme catalyses D-ribose 5-phosphate + ATP = 5-phospho-alpha-D-ribose 1-diphosphate + AMP + H(+). The protein operates within metabolic intermediate biosynthesis; 5-phospho-alpha-D-ribose 1-diphosphate biosynthesis; 5-phospho-alpha-D-ribose 1-diphosphate from D-ribose 5-phosphate (route I): step 1/1. Its function is as follows. Involved in the biosynthesis of the central metabolite phospho-alpha-D-ribosyl-1-pyrophosphate (PRPP) via the transfer of pyrophosphoryl group from ATP to 1-hydroxyl of ribose-5-phosphate (Rib-5-P). The protein is Ribose-phosphate pyrophosphokinase of Photorhabdus laumondii subsp. laumondii (strain DSM 15139 / CIP 105565 / TT01) (Photorhabdus luminescens subsp. laumondii).